The primary structure comprises 239 residues: Non-classical arabinogalactan protein 30 (239 aa).

The N-terminal stretch at 1–24 is a signal peptide; that stretch reads MGIIGKSVSLTLFALLCFTSSVFT. N-linked (GlcNAc...) asparagine glycosylation occurs at Asn-106.

This sequence belongs to the non-classical AGP family. In terms of tissue distribution, specifically expressed in root tips.

It is found in the secreted. Its subcellular location is the cell wall. Proteoglycan required for the timing of seed germination. May function in the abscisic acid (ABA) response. The sequence is that of Non-classical arabinogalactan protein 30 from Arabidopsis thaliana (Mouse-ear cress).